The chain runs to 337 residues: Phenylalanine--tRNA ligase alpha subunit (337 aa).

Glutamate 252 is a binding site for Mg(2+).

The protein belongs to the class-II aminoacyl-tRNA synthetase family. Phe-tRNA synthetase alpha subunit type 1 subfamily. In terms of assembly, tetramer of two alpha and two beta subunits. Requires Mg(2+) as cofactor.

It localises to the cytoplasm. The catalysed reaction is tRNA(Phe) + L-phenylalanine + ATP = L-phenylalanyl-tRNA(Phe) + AMP + diphosphate + H(+). In Francisella tularensis subsp. tularensis (strain SCHU S4 / Schu 4), this protein is Phenylalanine--tRNA ligase alpha subunit.